The sequence spans 967 residues: Transmembrane channel-like protein 5 (967 aa).

Polar residues-rich tracts occupy residues 1 to 10 (MSSFHQNSSY), 21 to 31 (GSRNHTHNYLE), 53 to 62 (NPHSSGSRTN), and 168 to 184 (QDNSYYHSGSRPHSNLP). The interval 1–240 (MSSFHQNSSY…EEGDGYSSSK (240 aa)) is disordered. At 1-420 (MSSFHQNSSY…YFSFLRWLLK (420 aa)) the chain is on the extracellular side. The chain crosses the membrane as a helical span at residues 421–441 (FNIFSFVMNFSFIIIPQFTVG). Over 442 to 449 (AKNTLQFT) the chain is Cytoplasmic. The chain crosses the membrane as a helical span at residues 450–470 (GLEFFTGAGYFGDTVMYYGFY). Residues 471-487 (TNSTIRHRMGGASYNMQ) are Extracellular-facing. A helical transmembrane segment spans residues 488–508 (LAYIFTIGACLVVCFFSLLFS). Residues 509-581 (MAKYFRNNFI…NQQLTRFSAH (73 aa)) are Cytoplasmic-facing. A helical membrane pass occupies residues 582 to 602 (VAAWLVSTGVTAACCVAVYYL). Residues 603 to 616 (AEYNSEFLKTHRNP) lie on the Extracellular side of the membrane. A helical membrane pass occupies residues 617–637 (GAVLLLPFVVSCINLAVPRFY). The Cytoplasmic portion of the chain corresponds to 638–660 (SMFRLVERYEIPRQEVYVLLVRN). Residues 661–681 (IFLKISIVGILCYYWLNIVAL) form a helical membrane-spanning segment. At 682–694 (SGEECWETLIGQD) the chain is on the extracellular side. The chain crosses the membrane as a helical span at residues 695–715 (IYRLLLMDFVFSLADSLLGEF). Topologically, residues 716 to 749 (LRRLIGMKFTSLSLQEFDIARNVLELIYAQTLTW) are cytoplasmic. Residues 750 to 770 (LGIFFCPLLPFIQMITLFIMF) form a helical membrane-spanning segment. Over 771–796 (YVKNVSLMMNFQPPSKAWRASQMITF) the chain is Extracellular. A helical transmembrane segment spans residues 797–817 (FIFLLFFPSFTGVLCTLAITI). Topologically, residues 818–861 (WRLKPSADCGPFRGLPSFIQSIYSWIDTLSRRPGYLWVVWIYQN) are cytoplasmic. A helical transmembrane segment spans residues 862–882 (LIGSVHFFFILTLIVLIITYL). Topologically, residues 883–967 (YWQITEGRKV…RSAQEENPIA (85 aa)) are extracellular.

This sequence belongs to the TMC family. As to expression, ubiquitously expressed.

The protein localises to the membrane. Its function is as follows. Probable component of an ion channel. Molecular function hasn't been characterized yet. This Mus musculus (Mouse) protein is Transmembrane channel-like protein 5.